The chain runs to 461 residues: MNKYVVILAAGKGTRMKSKLYKVLHKVCGKTMVEHVVEAAKGTNPDKIITVVGNGAESVKDVLAGQSEFAFQEKQLGTGDAVLAANDLLENLEGSTLVATGDTPLFTAETFNNLFKKHEESGNSATVLTAKAPNPFGYGRIIRDEDGNVLRIVEQKDGTPEELAVDEINTGVFCFDNKELFKALKQVGNDNAQGEYYLTDVLEIMRKAGHKVGAYEMPDFSESLGVNDRIALAQATKIMQRRINEEHMRNGVSFIDPDTAYIDSDVKIGNDTVIEGNVVIKGKTEIGSNCYITNSSRIIDSKIGNNVTITSSTLQEAQMDDNTDIGPNSHLRPKAVIRKGAHIGNFVEIKKAEIGENTKVGHLTYVGDATLGKDINIGCGTIFSNYDGVKKFHTNVGDHSFIGAGATIIAPVNIADHAFVAADSTITKDVEKYDMAIARGRQTNKPDYWHKLPLAKDKEWE.

Positions 1-229 are pyrophosphorylase; sequence MNKYVVILAA…FSESLGVNDR (229 aa). UDP-N-acetyl-alpha-D-glucosamine-binding positions include 8–11, lysine 22, glutamine 72, and 77–78; these read LAAG and GT. Aspartate 102 is a Mg(2+) binding site. UDP-N-acetyl-alpha-D-glucosamine is bound by residues glycine 139, glutamate 154, asparagine 169, and asparagine 227. Asparagine 227 serves as a coordination point for Mg(2+). A linker region spans residues 230–250; the sequence is IALAQATKIMQRRINEEHMRN. The N-acetyltransferase stretch occupies residues 251 to 461; that stretch reads GVSFIDPDTA…LPLAKDKEWE (211 aa). UDP-N-acetyl-alpha-D-glucosamine-binding residues include arginine 332 and lysine 350. The active-site Proton acceptor is histidine 362. Positions 365 and 376 each coordinate UDP-N-acetyl-alpha-D-glucosamine. Residues 385–386, alanine 422, and arginine 439 each bind acetyl-CoA; that span reads NY.

In the N-terminal section; belongs to the N-acetylglucosamine-1-phosphate uridyltransferase family. This sequence in the C-terminal section; belongs to the transferase hexapeptide repeat family. In terms of assembly, homotrimer. Requires Mg(2+) as cofactor.

The protein resides in the cytoplasm. It catalyses the reaction alpha-D-glucosamine 1-phosphate + acetyl-CoA = N-acetyl-alpha-D-glucosamine 1-phosphate + CoA + H(+). It carries out the reaction N-acetyl-alpha-D-glucosamine 1-phosphate + UTP + H(+) = UDP-N-acetyl-alpha-D-glucosamine + diphosphate. Its pathway is nucleotide-sugar biosynthesis; UDP-N-acetyl-alpha-D-glucosamine biosynthesis; N-acetyl-alpha-D-glucosamine 1-phosphate from alpha-D-glucosamine 6-phosphate (route II): step 2/2. The protein operates within nucleotide-sugar biosynthesis; UDP-N-acetyl-alpha-D-glucosamine biosynthesis; UDP-N-acetyl-alpha-D-glucosamine from N-acetyl-alpha-D-glucosamine 1-phosphate: step 1/1. It functions in the pathway bacterial outer membrane biogenesis; LPS lipid A biosynthesis. Its function is as follows. Catalyzes the last two sequential reactions in the de novo biosynthetic pathway for UDP-N-acetylglucosamine (UDP-GlcNAc). The C-terminal domain catalyzes the transfer of acetyl group from acetyl coenzyme A to glucosamine-1-phosphate (GlcN-1-P) to produce N-acetylglucosamine-1-phosphate (GlcNAc-1-P), which is converted into UDP-GlcNAc by the transfer of uridine 5-monophosphate (from uridine 5-triphosphate), a reaction catalyzed by the N-terminal domain. The polypeptide is Bifunctional protein GlmU (Lactobacillus johnsonii (strain CNCM I-12250 / La1 / NCC 533)).